We begin with the raw amino-acid sequence, 606 residues long: Arginine--tRNA ligase (606 aa).

The 'HIGH' region motif lies at 126-136 (PNTNKPLHLGH).

The protein belongs to the class-I aminoacyl-tRNA synthetase family. As to quaternary structure, monomer.

It localises to the cytoplasm. The enzyme catalyses tRNA(Arg) + L-arginine + ATP = L-arginyl-tRNA(Arg) + AMP + diphosphate. This chain is Arginine--tRNA ligase, found in Phocaeicola vulgatus (strain ATCC 8482 / DSM 1447 / JCM 5826 / CCUG 4940 / NBRC 14291 / NCTC 11154) (Bacteroides vulgatus).